We begin with the raw amino-acid sequence, 271 residues long: Small ribosomal subunit protein uS2 (271 aa).

Residues 223–271 (RALAGSEEGEATEEVTPASEAEKQEVLAEAMSEEGDALQESEVVEEEEK) are disordered. Acidic residues predominate over residues 253-271 (MSEEGDALQESEVVEEEEK).

The protein belongs to the universal ribosomal protein uS2 family.

This Wolinella succinogenes (strain ATCC 29543 / DSM 1740 / CCUG 13145 / JCM 31913 / LMG 7466 / NCTC 11488 / FDC 602W) (Vibrio succinogenes) protein is Small ribosomal subunit protein uS2.